The primary structure comprises 608 residues: V-type ATP synthase subunit I (608 aa).

Transmembrane regions (helical) follow at residues 308–325, 327–346, 356–376, 405–425, 438–458, 464–484, 495–515, 517–537, and 550–570; these read ISFI…MIIG, AAYG…SFLL, GLIF…GTWF, IIFI…VWNF, IAQI…LNLI, FPMY…VFVF, CILK…SGFA, IISY…SASF, and IGLI…NIML.

This sequence belongs to the V-ATPase 116 kDa subunit family.

The protein localises to the cell membrane. In terms of biological role, produces ATP from ADP in the presence of a proton gradient across the membrane. In Borreliella burgdorferi (strain ATCC 35210 / DSM 4680 / CIP 102532 / B31) (Borrelia burgdorferi), this protein is V-type ATP synthase subunit I (atpI).